The primary structure comprises 98 residues: U1-theraphotoxin-Ap1a (98 aa).

Residues 1–23 (MRSLTLAAVLACSLLLVFHTSAA) form the signal peptide. Residues 24-50 (EELEVQDGHLMNPGDGDTALATVDDER) constitute a propeptide that is removed on maturation. Disulfide bonds link Cys54/Cys84, Cys58/Cys90, and Cys72/Cys95. The disordered stretch occupies residues 63-84 (DGKSKEGKPCKPKGDKNKDKKC).

The protein belongs to the neurotoxin 12 (Hwtx-2) family. 01 (Ap1a) subfamily. Expressed by the venom gland.

It is found in the secreted. Functionally, is toxic to both insects and mammals. Induces reversible paralysis when injected into S.frugiperda larvae. Reduces both the amplitude and frequency of responses from muscle (GF-TTM and GF-DLM) pathways in the D.melanogaster giant fiber circuit, suggesting an action at the neuromuscular junction, which is mediated by glutamatergic receptors. In mice, intracranial injection of 30 ug causes increased urination, myoclonus, hypermotility with circular movements followed by respiratory and generalized seizures resulting in death within 25-35 minutes of injection. In Acanthoscurria paulensis (Brazilian giant black tarantula spider), this protein is U1-theraphotoxin-Ap1a.